The sequence spans 692 residues: PTS system glucoside-specific EIICBA component (692 aa).

In terms of domain architecture, PTS EIIC type-1 spans 6-430; sequence KKFFGQLQRI…LNLKTPGRED (425 aa). The next 10 membrane-spanning stretches (helical) occupy residues 15-35, 84-104, 140-160, 185-205, 215-235, 287-307, 318-338, 344-364, 370-390, and 398-418; these read IGKA…LLTF, LGLA…YLIM, LVLG…IGAL, FVPI…SFVW, LSNF…GIIE, AFTT…AFAI, VVGG…ITEP, LFVA…SFLI, VQIG…GLLS, and LVIP…TFLI. The PTS EIIB type-1 domain occupies 441 to 522; sequence SELPFEVLEA…QQIMDGKITS (82 aa). The active-site Phosphocysteine intermediate; for EIIB activity is the C463. The region spanning 563–667 is the PTS EIIA type-1 domain; it reads DKVFSAKMMG…DTITPIIITN (105 aa). Catalysis depends on H615, which acts as the Tele-phosphohistidine intermediate; for EIIA activity.

Its subcellular location is the cell membrane. With respect to regulation, inhibited by methyl alpha-D-glucoside, methyl beta-D-glucoside, p-nitrophenyl alpha-D-glucoside, o-nitrophenyl beta-D-glucoside and salicin, but not by 2-deoxyglucose. The phosphoenolpyruvate-dependent sugar phosphotransferase system (sugar PTS), a major carbohydrate active -transport system, catalyzes the phosphorylation of incoming sugar substrates concomitantly with their translocation across the cell membrane. This system is involved in alpha- and beta-glucoside transport. Can also transport glucose, but not galactose, fructose, mannose, cellobiose, sucrose, maltose, lactose, melibiose and trehalose, as well as N-acetylglucosamine. The chain is PTS system glucoside-specific EIICBA component (glcB) from Staphylococcus carnosus (strain TM300).